Consider the following 503-residue polypeptide: Aspartyl/glutamyl-tRNA(Asn/Gln) amidotransferase subunit B (503 aa).

This sequence belongs to the GatB/GatE family. GatB subfamily. In terms of assembly, heterotrimer of A, B and C subunits.

The catalysed reaction is L-glutamyl-tRNA(Gln) + L-glutamine + ATP + H2O = L-glutaminyl-tRNA(Gln) + L-glutamate + ADP + phosphate + H(+). It catalyses the reaction L-aspartyl-tRNA(Asn) + L-glutamine + ATP + H2O = L-asparaginyl-tRNA(Asn) + L-glutamate + ADP + phosphate + 2 H(+). Its function is as follows. Allows the formation of correctly charged Asn-tRNA(Asn) or Gln-tRNA(Gln) through the transamidation of misacylated Asp-tRNA(Asn) or Glu-tRNA(Gln) in organisms which lack either or both of asparaginyl-tRNA or glutaminyl-tRNA synthetases. The reaction takes place in the presence of glutamine and ATP through an activated phospho-Asp-tRNA(Asn) or phospho-Glu-tRNA(Gln). In Cereibacter sphaeroides (strain ATCC 17023 / DSM 158 / JCM 6121 / CCUG 31486 / LMG 2827 / NBRC 12203 / NCIMB 8253 / ATH 2.4.1.) (Rhodobacter sphaeroides), this protein is Aspartyl/glutamyl-tRNA(Asn/Gln) amidotransferase subunit B.